The following is a 293-amino-acid chain: Phosphatidylserine decarboxylase proenzyme (293 aa).

Residues aspartate 88, histidine 144, and serine 247 each act as charge relay system; for autoendoproteolytic cleavage activity in the active site. The active-site Schiff-base intermediate with substrate; via pyruvic acid; for decarboxylase activity is serine 247. At serine 247 the chain carries Pyruvic acid (Ser); by autocatalysis.

It belongs to the phosphatidylserine decarboxylase family. PSD-B subfamily. Prokaryotic type I sub-subfamily. As to quaternary structure, heterodimer of a large membrane-associated beta subunit and a small pyruvoyl-containing alpha subunit. Pyruvate is required as a cofactor. In terms of processing, is synthesized initially as an inactive proenzyme. Formation of the active enzyme involves a self-maturation process in which the active site pyruvoyl group is generated from an internal serine residue via an autocatalytic post-translational modification. Two non-identical subunits are generated from the proenzyme in this reaction, and the pyruvate is formed at the N-terminus of the alpha chain, which is derived from the carboxyl end of the proenzyme. The autoendoproteolytic cleavage occurs by a canonical serine protease mechanism, in which the side chain hydroxyl group of the serine supplies its oxygen atom to form the C-terminus of the beta chain, while the remainder of the serine residue undergoes an oxidative deamination to produce ammonia and the pyruvoyl prosthetic group on the alpha chain. During this reaction, the Ser that is part of the protease active site of the proenzyme becomes the pyruvoyl prosthetic group, which constitutes an essential element of the active site of the mature decarboxylase.

The protein resides in the cell membrane. It catalyses the reaction a 1,2-diacyl-sn-glycero-3-phospho-L-serine + H(+) = a 1,2-diacyl-sn-glycero-3-phosphoethanolamine + CO2. Its pathway is phospholipid metabolism; phosphatidylethanolamine biosynthesis; phosphatidylethanolamine from CDP-diacylglycerol: step 2/2. In terms of biological role, catalyzes the formation of phosphatidylethanolamine (PtdEtn) from phosphatidylserine (PtdSer). The chain is Phosphatidylserine decarboxylase proenzyme from Xylella fastidiosa (strain 9a5c).